The primary structure comprises 252 residues: MRKRIGIGALNDDEYLKQYEEVGNELIEQQSDEIASQLSTFQEALKTFAREHATEIKQNSQFRNTFVKLALKIGLDPFVSGSDESAWAAVGMNEFYYQVAVRVIEVCYATQMENGGLLSVSQVCRFLNEENEAFGHEWLRETDVVRAVDSLAPLGPGFVLEKIAGKQYIRSLPLELNTDQNVVLEAVEILGYVTISILRDNYAWERSRCIQVLNDLVSKSLLWIDSQGVEMAYWGASNLIDDQAQRFLYENF.

This sequence belongs to the SNF8 family. As to quaternary structure, component of the endosomal sorting complex required for transport II (ESCRT-II).

Its subcellular location is the cytoplasm. It localises to the nucleus. The protein resides in the endosome membrane. Functionally, component of the endosomal sorting complex required for transport II (ESCRT-II), which is required for multivesicular body (MVB) formation and sorting of endosomal cargo proteins into MVBs. The MVB pathway mediates delivery of transmembrane proteins into the lumen of the lysosome for degradation. The ESCRT-II complex is probably involved in the recruitment of the ESCRT-III complex. Negatively regulates meiotic spindle pole body maturation via indirect regulation of the pcp1 gene. Required for efficient entry into pre-meiotic S phase. In Schizosaccharomyces pombe (strain 972 / ATCC 24843) (Fission yeast), this protein is Vacuolar-sorting protein dot2 (dot2).